A 293-amino-acid polypeptide reads, in one-letter code: ATP synthase gamma chain (293 aa).

This sequence belongs to the ATPase gamma chain family. F-type ATPases have 2 components, CF(1) - the catalytic core - and CF(0) - the membrane proton channel. CF(1) has five subunits: alpha(3), beta(3), gamma(1), delta(1), epsilon(1). CF(0) has three main subunits: a, b and c.

It localises to the cell membrane. Functionally, produces ATP from ADP in the presence of a proton gradient across the membrane. The gamma chain is believed to be important in regulating ATPase activity and the flow of protons through the CF(0) complex. This is ATP synthase gamma chain from Streptococcus agalactiae serotype Ia (strain ATCC 27591 / A909 / CDC SS700).